The sequence spans 62 residues: Large ribosomal subunit protein uL30 (62 aa).

It belongs to the universal ribosomal protein uL30 family. In terms of assembly, part of the 50S ribosomal subunit.

This chain is Large ribosomal subunit protein uL30, found in Dinoroseobacter shibae (strain DSM 16493 / NCIMB 14021 / DFL 12).